We begin with the raw amino-acid sequence, 451 residues long: LisH domain-containing protein C1711.05 (451 aa).

A LisH domain is found at 6-38 (MKSKVCPLIYHFLQENGYVKTAQTFLKETGDKD). Residues 59 to 394 (PYLTTEDVGK…VGDPSQWDFA (336 aa)) are disordered. Residues 73 to 98 (KESLEKSNDDSQKISKKGAPPEKAHS) are compositionally biased toward basic and acidic residues. Positions 99–120 (SSEASGSGSSSDESDSSSSESE) are enriched in low complexity. The span at 135-145 (SESESSSEDSD) shows a compositional bias: acidic residues. Low complexity predominate over residues 146–174 (SSSSSSDSESESSSEGSDSSSSSSSSESE). Acidic residues predominate over residues 189-199 (SESESSSEDSD). Residues 200-228 (SSSSSSDSESESSSEGSDSSSSSSSSESE) show a composition bias toward low complexity. Acidic residues-rich tracts occupy residues 243–253 (SESESSSEDSD) and 278–300 (DSED…EDSD). Positions 301-319 (STSSSSDSDSSSSSEDGNS) are enriched in low complexity. Positions 320 to 332 (NTDTTTSGEVSAQ) are enriched in polar residues. The segment covering 333–343 (SSTNSTSSEES) has biased composition (low complexity). Over residues 344-365 (TSVKDEDSSKIHDKSLKRKHED) the composition is skewed to basic and acidic residues. Residues 369–380 (STSTKSSRTTKT) are compositionally biased toward low complexity.

The protein resides in the nucleus. It is found in the nucleolus. This is LisH domain-containing protein C1711.05 from Schizosaccharomyces pombe (strain 972 / ATCC 24843) (Fission yeast).